A 718-amino-acid polypeptide reads, in one-letter code: MASSGEDISNDDDDMHPAAAGMADGVHLLGFSDEILLHILSHVPSTDLILNVRRTCRKLAALCLDKSLIHTVLLQKDYQASEDKVRQLVKEIGREIQQLSMAGCYWLPGSTVEHVARCRSLVKVNLSGCHLTSLRLSKMLSALQHLRSLAIDVSPGFDASQLSSECKATLSRVRELKQTLFTPSYGVVPCCTSLEKLLLYFEILDRTREGAILSGQLMVGQSNVPHYQNLRVFYARLAPGYINQEVVRLYLAVLSDRTPQNLHAFLISVPGSFAESGATKNLLDSMARNVVLDALQLPKSWLNGSSLLQHMKFNNPFYFSFSRCTLSGGHLIQQVINGGKDLRSLASLNLSGCVHCLSPDSLLRKAEDDIDSSILETLVASCCNLRHLNLSAAHHHSSEGLGRHLCQLLARLRHLRSLSLPVCSVADSAPRADRAPAQPAMHAVPRGFGKKVRVGVQSCPSPFSGQACPQPSSVFWSLLKNLPFLEHLELIGSNFSSAMPRNEPAIRNSLPPCSRAQSVGDSEVAAIGQLAFLRHLTLAQLPSVLTGSGLVNIGLQCQQLRSLSLANLGMMGKVVYMPALSDMLKHCKRLRDLRLEQPYFSANAQFFQALSQCPSLQRLCLVSRSGTLQPDAVLAFMARCLQVVMCHLFTGESLATCKSLQQSLLRSFQAERPALNVVIFPLLHEGLTDVIRDVPLVHLDEITLFKSRVAEEPPNLWW.

An F-box domain is found at 25–72 (GVHLLGFSDEILLHILSHVPSTDLILNVRRTCRKLAALCLDKSLIHTV). LRR repeat units follow at residues 77–103 (DYQASEDKVRQLVKEIGREIQQLSMAG), 104–128 (CYWLPGSTVEHVARCRSLVKVNLSG), 129–153 (CHLTSLRLSKMLSALQHLRSLAIDV), 177–201 (KQTLFTPSYGVVPCCTSLEKLLLYF), 324–352 (CTLSGGHLIQQVINGGKDLRSLASLNLSG), 367–392 (EDDIDSSILETLVASCCNLRHLNLSA), 393–422 (AHHHSSEGLGRHLCQLLARLRHLRSLSLPV), 468–492 (CPQPSSVFWSLLKNLPFLEHLELIG), 516–540 (AQSVGDSEVAAIGQLAFLRHLTLAQ), 542–567 (PSVLTGSGLVNIGLQCQQLRSLSLAN), 572–597 (GKVVYMPALSDMLKHCKRLRDLRLEQ), and 599–623 (YFSANAQFFQALSQCPSLQRLCLVS).

Directly interacts with SKP1 and CUL1.

Its function is as follows. Substrate-recognition component of the SCF (SKP1-CUL1-F-box protein)-type E3 ubiquitin ligase complex. This is F-box/LRR-repeat protein 18 (FBXL18) from Homo sapiens (Human).